We begin with the raw amino-acid sequence, 213 residues long: Thymidylate kinase (213 aa).

10-17 lines the ATP pocket; that stretch reads GLEGAGKT.

The protein belongs to the thymidylate kinase family.

It carries out the reaction dTMP + ATP = dTDP + ADP. Phosphorylation of dTMP to form dTDP in both de novo and salvage pathways of dTTP synthesis. The sequence is that of Thymidylate kinase from Shigella boydii serotype 18 (strain CDC 3083-94 / BS512).